The following is a 1019-amino-acid chain: Collagen alpha-2(VI) chain (1019 aa).

An N-terminal signal peptide occupies residues 1-20; that stretch reads MLQGTCSVLLLWGILGAIQA. The tract at residues 21–256 is nonhelical region; the sequence is QQQEVISPDT…YKVSCLEIPG (236 aa). The 189-residue stretch at 46-234 folds into the VWFA 1 domain; the sequence is HVYFVLDTSE…EIDQDTINRI (189 aa). The N-linked (GlcNAc...) asparagine glycan is linked to asparagine 140. Residues 257–588 form a disordered region; it reads PSGPKGYRGQ…GEPGPPGDPG (332 aa). Residues 257-590 are triple-helical region; sequence PSGPKGYRGQ…PGPPGDPGLT (334 aa). Residues 287-305 show a composition bias toward low complexity; that stretch reads DPGIEGPIGFPGPKGVPGF. Basic and acidic residues predominate over residues 306-318; sequence KGEKGEFGADGRK. Asparagine 327 carries N-linked (GlcNAc...) asparagine glycosylation. Composition is skewed to basic and acidic residues over residues 365 to 377 and 419 to 429; these read ERGDQGGKGDPGR and PKGEPGRRGDP. 5 short sequence motifs (cell attachment site) span residues 366 to 368, 426 to 428, 489 to 491, 498 to 500, and 539 to 541; these read RGD. A compositionally biased stretch (basic and acidic residues) spans 524–557; the sequence is PGEKGEPGPRGPEGGRGDFGLKGEPGRKGEKGEP. Positions 559-569 are enriched in pro residues; the sequence is DPGPPGEPGPR. The interval 591–1019 is nonhelical region; that stretch reads ECDVMTYVRE…FFDRFIRWIC (429 aa). VWFA domains are found at residues 615 to 805 and 833 to 1014; these read DVVF…EDVL and DIVF…FDRF. Asparagine 630 carries N-linked (GlcNAc...) asparagine glycosylation. Residue threonine 701 is modified to Phosphothreonine. Phosphoserine is present on serine 705. Asparagine 785, asparagine 897, and asparagine 954 each carry an N-linked (GlcNAc...) asparagine glycan.

This sequence belongs to the type VI collagen family. Trimers composed of three different chains: alpha-1(VI), alpha-2(VI), and alpha-3(VI) or alpha-5(VI) or alpha-6(VI). Interacts with CSPG4. In terms of processing, prolines at the third position of the tripeptide repeating unit (G-X-Y) are hydroxylated in some or all of the chains.

The protein resides in the secreted. It is found in the extracellular space. The protein localises to the extracellular matrix. Its subcellular location is the membrane. Functionally, collagen VI acts as a cell-binding protein. The chain is Collagen alpha-2(VI) chain (COL6A2) from Homo sapiens (Human).